A 325-amino-acid polypeptide reads, in one-letter code: Aldo-keto reductase family 1 member A1 (325 aa).

The residue at position 2 (T2) is an N-acetylthreonine. S4 carries the post-translational modification Phosphoserine. Residues 11 to 20 (GQKMPLIGLG), T21, and W22 contribute to the NADP(+) site. S38 carries the phosphoserine modification. Residue D45 participates in NADP(+) binding. The Proton donor role is filled by Y50. N6-acetyllysine; alternate is present on K127. Position 127 is an N6-succinyllysine; alternate (K127). K145 carries the post-translational modification N6-succinyllysine. Residues S162, N163, S211, L213, S215, S216, K263, S264, I265, R269, Q272, and N273 each coordinate NADP(+). Residue S211 is modified to Phosphoserine.

It belongs to the aldo/keto reductase family. Monomer. As to expression, widely expressed.

Its subcellular location is the cytoplasm. It localises to the cytosol. The protein resides in the apical cell membrane. It carries out the reaction a primary alcohol + NADP(+) = an aldehyde + NADPH + H(+). It catalyses the reaction L-gulonate + NADP(+) = aldehydo-D-glucuronate + NADPH + H(+). The catalysed reaction is L-gulono-1,4-lactone + NADP(+) = D-glucurono-3,6-lactone + NADPH + H(+). The enzyme catalyses allyl alcohol + NADP(+) = acrolein + NADPH + H(+). It carries out the reaction glycerol + NADP(+) = D-glyceraldehyde + NADPH + H(+). It catalyses the reaction glycerol + NADP(+) = L-glyceraldehyde + NADPH + H(+). The catalysed reaction is hydroxyacetone + NADP(+) = methylglyoxal + NADPH + H(+). The enzyme catalyses 3-deoxyfructose + NADP(+) = 3-deoxyglucosone + NADPH + H(+). It carries out the reaction (R)-mevalonate + NADP(+) = (R)-mevaldate + NADPH + H(+). It catalyses the reaction pyridine 3-methanol + NADP(+) = pyridine-3-carbaldehyde + NADPH + H(+). The catalysed reaction is S-nitroso-CoA + NADPH + H(+) = sulfinamide-CoA + NADP(+). The enzyme catalyses S-nitrosoglutathione + NADPH + H(+) = S-(hydroxysulfenamide)glutathione + NADP(+). Catalyzes the NADPH-dependent reduction of a wide variety of carbonyl-containing compounds to their corresponding alcohols. Displays enzymatic activity towards endogenous metabolites such as aromatic and aliphatic aldehydes, ketones, monosaccharides and bile acids, with a preference for negatively charged substrates, such as glucuronate and succinic semialdehyde. Plays an important role in ascorbic acid biosynthesis by catalyzing the reduction of D-glucuronic acid and D-glucurono-gamma-lactone. Functions as a detoxifiying enzyme by reducing a range of toxic aldehydes. Reduces methylglyoxal and 3-deoxyglucosone, which are present at elevated levels under hyperglycemic conditions and are cytotoxic. Involved in the detoxification of lipid-derived aldehydes like acrolein. Plays a role in the activation of procarcinogens, such as polycyclic aromatic hydrocarbon trans-dihydrodiols, and in the metabolism of various xenobiotics and drugs. Also acts as an inhibitor of protein S-nitrosylation by mediating degradation of S-nitroso-coenzyme A (S-nitroso-CoA), a cofactor required to S-nitrosylate proteins. S-nitroso-CoA reductase activity is involved in reprogramming intermediary metabolism in renal proximal tubules, notably by inhibiting protein S-nitrosylation of isoform 2 of PKM (PKM2). Also acts as a S-nitroso-glutathione reductase by catalyzing the NADPH-dependent reduction of S-nitrosoglutathione. Displays no reductase activity towards retinoids. This is Aldo-keto reductase family 1 member A1 from Mus musculus (Mouse).